A 74-amino-acid polypeptide reads, in one-letter code: CLAVATA3/ESR (CLE)-related protein 1 (74 aa).

A signal peptide spans 1–22 (MANLKFLLCLFLICVSLSRSSA). N59 is a glycosylation site (N-linked (GlcNAc...) asparagine). Hydroxyproline is present on residues P66 and P69. Residue P69 is glycosylated (O-linked (Ara...) hydroxyproline).

This sequence belongs to the CLV3/ESR signal peptide family. Post-translationally, the O-glycosylation (arabinosylation) of the hydroxyproline Pro-69 enhances binding affinity of the CLE1p peptide for its receptor. As to expression, mostly expressed in roots and seedlings, and, to a lower extent, in stems and apex.

It localises to the secreted. It is found in the extracellular space. Extracellular signal peptide that regulates cell fate. This Arabidopsis thaliana (Mouse-ear cress) protein is CLAVATA3/ESR (CLE)-related protein 1.